Here is a 109-residue protein sequence, read N- to C-terminus: Aquaporin-2 (109 aa).

The Cytoplasmic segment spans residues 1–6 (SIAFSR). A helical membrane pass occupies residues 7-27 (AVFAEFLATLIFVFFGLGSAL). The Extracellular segment spans residues 28–35 (NWQQSLPS). Residues 36–54 (VLQIAMAFGLAIGTLVQAL) traverse the membrane as a helical segment. Residues 55-59 (GHISG) lie on the Cytoplasmic side of the membrane. Residues 60 to 69 (AHINPAVTVA) constitute an intramembrane region (discontinuously helical). The NPA 1 signature appears at 63–65 (NPA). At 70-80 (CLVGCHVSFLR) the chain is on the cytoplasmic side. Residues 81 to 102 (AAFYVAAQLLGAVAGAALLHEV) form a helical membrane-spanning segment. Over 103–109 (TPSDVRG) the chain is Extracellular.

The protein belongs to the MIP/aquaporin (TC 1.A.8) family. In terms of assembly, homotetramer. In terms of processing, serine phosphorylation is necessary and sufficient for expression at the apical membrane. Endocytosis is not phosphorylation-dependent. N-glycosylated.

It localises to the apical cell membrane. Its subcellular location is the basolateral cell membrane. The protein resides in the cell membrane. The protein localises to the cytoplasmic vesicle membrane. It is found in the golgi apparatus. It localises to the trans-Golgi network membrane. It catalyses the reaction H2O(in) = H2O(out). The enzyme catalyses glycerol(in) = glycerol(out). Forms a water-specific channel that provides the plasma membranes of renal collecting duct with high permeability to water, thereby permitting water to move in the direction of an osmotic gradient. Plays an essential role in renal water homeostasis. Could also be permeable to glycerol. This Talpa europaea (European mole) protein is Aquaporin-2.